A 184-amino-acid polypeptide reads, in one-letter code: ATP synthase subunit b, chloroplastic (184 aa).

A helical membrane pass occupies residues 27–49 (LATNPINLSVVFGVLIFFGKGVL).

It belongs to the ATPase B chain family. In terms of assembly, F-type ATPases have 2 components, F(1) - the catalytic core - and F(0) - the membrane proton channel. F(1) has five subunits: alpha(3), beta(3), gamma(1), delta(1), epsilon(1). F(0) has four main subunits: a(1), b(1), b'(1) and c(10-14). The alpha and beta chains form an alternating ring which encloses part of the gamma chain. F(1) is attached to F(0) by a central stalk formed by the gamma and epsilon chains, while a peripheral stalk is formed by the delta, b and b' chains.

The protein resides in the plastid. It localises to the chloroplast thylakoid membrane. Functionally, f(1)F(0) ATP synthase produces ATP from ADP in the presence of a proton or sodium gradient. F-type ATPases consist of two structural domains, F(1) containing the extramembraneous catalytic core and F(0) containing the membrane proton channel, linked together by a central stalk and a peripheral stalk. During catalysis, ATP synthesis in the catalytic domain of F(1) is coupled via a rotary mechanism of the central stalk subunits to proton translocation. Component of the F(0) channel, it forms part of the peripheral stalk, linking F(1) to F(0). This chain is ATP synthase subunit b, chloroplastic, found in Crucihimalaya wallichii (Rock-cress).